The following is a 188-amino-acid chain: Large ribosomal subunit protein bL35m (188 aa).

Belongs to the bacterial ribosomal protein bL35 family.

Its subcellular location is the mitochondrion. This Mus musculus (Mouse) protein is Large ribosomal subunit protein bL35m (Mrpl35).